A 195-amino-acid polypeptide reads, in one-letter code: Guanylate kinase (195 aa).

In terms of domain architecture, Guanylate kinase-like spans Gly-7–Asp-186. An ATP-binding site is contributed by Ser-14–Thr-21.

Belongs to the guanylate kinase family.

It localises to the cytoplasm. It catalyses the reaction GMP + ATP = GDP + ADP. In terms of biological role, essential for recycling GMP and indirectly, cGMP. The polypeptide is Guanylate kinase (Wolbachia sp. subsp. Brugia malayi (strain TRS)).